A 126-amino-acid chain; its full sequence is Spermidine export protein MdtJ (126 aa).

Helical transmembrane passes span 1 to 21 (MMIYWIFLGLAIVAEIIGTLS), 32 to 52 (TGHIVMYFMITGSYIMLALAV), 55 to 75 (VALGVAYALWEGIGILIITVF), and 82 to 102 (ESLSPLKIAGLVTLVGGIMLV). Residues 104–126 (SGTRKPKKPNSPNRNSGEHHATA) form a disordered region.

Belongs to the drug/metabolite transporter (DMT) superfamily. Small multidrug resistance (SMR) (TC 2.A.7.1) family. MdtJ subfamily. In terms of assembly, forms a complex with MdtI.

It localises to the cell inner membrane. Catalyzes the excretion of spermidine. The sequence is that of Spermidine export protein MdtJ from Yersinia enterocolitica serotype O:8 / biotype 1B (strain NCTC 13174 / 8081).